A 101-amino-acid polypeptide reads, in one-letter code: MNKTEFIAFMTEHGHHHKHQGHKSFTKADAEKALNWVLESIISATKHQHSVNITGFGSFGIQSRKSREGRNPKTGAKMTIPAYKQPVFKAGSKLKEACNNK.

The protein belongs to the bacterial histone-like protein family. Homodimer.

Histone-like DNA-binding protein which is capable of wrapping DNA to stabilize it, and thus to prevent its denaturation under extreme environmental conditions. The protein is DNA-binding protein HU (hup) of Rickettsia bellii (strain RML369-C).